A 70-amino-acid polypeptide reads, in one-letter code: Large ribosomal subunit protein eL24 (70 aa).

Positions 7, 10, 33, and 37 each coordinate Zn(2+). A C4-type zinc finger spans residues 7 to 37; that stretch reads CSFCGYEIEPGKGKMVVEKDGTVLYFCSSKC.

Belongs to the eukaryotic ribosomal protein eL24 family. In terms of assembly, part of the 50S ribosomal subunit. Forms a cluster with proteins L3 and L14. The cofactor is Zn(2+).

In terms of biological role, binds to the 23S rRNA. This chain is Large ribosomal subunit protein eL24, found in Methanocaldococcus jannaschii (strain ATCC 43067 / DSM 2661 / JAL-1 / JCM 10045 / NBRC 100440) (Methanococcus jannaschii).